Here is a 1268-residue protein sequence, read N- to C-terminus: SR-related and CTD-associated factor 8 (1268 aa).

Positions 1-139 (MEAVKTFNSE…PLLDMAAGIP (139 aa)) constitute a CID domain. Threonine 6 bears the Phosphothreonine mark. A Glycyl lysine isopeptide (Lys-Gly) (interchain with G-Cter in SUMO1) cross-link involves residue lysine 18. Residues 270 to 283 (GEDSEHSEESKKEM) show a composition bias toward basic and acidic residues. Disordered stretches follow at residues 270–290 (GEDS…QLSH), 322–355 (QQQP…QQHF), and 385–469 (EIFE…PVRS). Serine 273 carries the phosphoserine modification. The span at 327–354 (KVTPQDSQEGTFGSEHSASPSQGSSQQH) shows a compositional bias: polar residues. Positions 394–443 (VAVRSRSRTHSRSRSRSPRKRRSRSRSGSRKRKHRKRSRSHSREKKRKAS) are enriched in basic residues. Over residues 447–461 (SSERRAREREKERQK) the composition is skewed to basic and acidic residues. Positions 477-551 (TTLWVGQVDK…KVIKIAWALN (75 aa)) constitute an RRM domain. At serine 617 the chain carries Phosphoserine. A disordered region spans residues 776–807 (QIPSGENTRPVIPSDIPSSAAMLAQPPGASST). Asymmetric dimethylarginine is present on residues arginine 915, arginine 925, and arginine 936. Disordered stretches follow at residues 984–1012 (PGRP…EGDR) and 1040–1065 (RLDP…PVDM). Arginine 1071 is subject to Asymmetric dimethylarginine. The segment at 1199-1268 (ATSQRKGDNV…VVESTETEGT (70 aa)) is disordered. The span at 1249–1262 (GTVAGVESEAVVES) shows a compositional bias: low complexity.

Interacts with POLR2A; via C-terminal heptapeptide repeat domain (CTD) phosphorylated at 'Ser-2' and 'Ser-5'. Identified in a complex with CDC5L and other spliceosomal proteins.

It localises to the nucleus. Its subcellular location is the nucleus matrix. Anti-terminator protein required to prevent early mRNA termination during transcription. Together with SCAF4, acts by suppressing the use of early, alternative poly(A) sites, thereby preventing the accumulation of non-functional truncated proteins. Mechanistically, associates with the phosphorylated C-terminal heptapeptide repeat domain (CTD) of the largest RNA polymerase II subunit (POLR2A), and subsequently binds nascent RNA upstream of early polyadenylation sites to prevent premature mRNA transcript cleavage and polyadenylation. Independently of SCAF4, also acts as a positive regulator of transcript elongation. This Mus musculus (Mouse) protein is SR-related and CTD-associated factor 8.